Reading from the N-terminus, the 395-residue chain is Nuclear hormone receptor family member nhr-10 (395 aa).

Residues 15–90 constitute a DNA-binding region (nuclear receptor); the sequence is EEVCLVCSDI…VGMDRNAIQQ (76 aa). 2 consecutive NR C4-type zinc fingers follow at residues 18 to 38 and 54 to 78; these read CLVCSDISTGYHYGVPSCNGC and CQFQGKCPVDKSIRCACRHCRFEKC. The 241-residue stretch at 152–392 folds into the NR LBD domain; it reads PSRTLIEAVV…TFAKQLLFGI (241 aa).

This sequence belongs to the nuclear hormone receptor family.

Its subcellular location is the nucleus. Functionally, probable transcription factor that acts in a feed-forward loop with nhr-68 to activate genes involved in the vitamin B12-independent breakdown of the short-chain fatty acid propionate. This pathway is triggered in response to a diet low in vitamin B12, when canonical vitamin B12-dependent propionate breakdown cannot function; the resulting accumulation of propionate is probably sensed by nhr-10 and/or nhr-68. The chain is Nuclear hormone receptor family member nhr-10 (nhr-10) from Caenorhabditis elegans.